Here is a 132-residue protein sequence, read N- to C-terminus: Small ribosomal subunit protein uS8c (132 aa).

The protein belongs to the universal ribosomal protein uS8 family. In terms of assembly, part of the 30S ribosomal subunit.

Its subcellular location is the plastid. It is found in the chloroplast. Its function is as follows. One of the primary rRNA binding proteins, it binds directly to 16S rRNA central domain where it helps coordinate assembly of the platform of the 30S subunit. The sequence is that of Small ribosomal subunit protein uS8c (rps8) from Staurastrum punctulatum (Green alga).